Reading from the N-terminus, the 201-residue chain is NADH-quinone oxidoreductase subunit C (201 aa).

It belongs to the complex I 30 kDa subunit family. As to quaternary structure, NDH-1 is composed of 14 different subunits. Subunits NuoB, C, D, E, F, and G constitute the peripheral sector of the complex.

It is found in the cell inner membrane. It carries out the reaction a quinone + NADH + 5 H(+)(in) = a quinol + NAD(+) + 4 H(+)(out). In terms of biological role, NDH-1 shuttles electrons from NADH, via FMN and iron-sulfur (Fe-S) centers, to quinones in the respiratory chain. The immediate electron acceptor for the enzyme in this species is believed to be ubiquinone. Couples the redox reaction to proton translocation (for every two electrons transferred, four hydrogen ions are translocated across the cytoplasmic membrane), and thus conserves the redox energy in a proton gradient. This Sinorhizobium medicae (strain WSM419) (Ensifer medicae) protein is NADH-quinone oxidoreductase subunit C.